Here is a 215-residue protein sequence, read N- to C-terminus: Adenylate kinase (215 aa).

10 to 15 (GAGKGT) serves as a coordination point for ATP. Residues 30–59 (STGDMLRAAIKAGTPLGLEAKKIIDEGGLV) are NMP. AMP is bound by residues T31, R36, 57–59 (GLV), 85–88 (GFPR), and Q92. The segment at 122 to 159 (GRRVHLASGRTYHVTYNPPKTEGKDDVTGEDLIQRDDD) is LID. ATP-binding positions include R123 and 132–133 (TY). Residues R156 and R167 each coordinate AMP. Q200 is a binding site for ATP.

The protein belongs to the adenylate kinase family. In terms of assembly, monomer.

The protein localises to the cytoplasm. It catalyses the reaction AMP + ATP = 2 ADP. It functions in the pathway purine metabolism; AMP biosynthesis via salvage pathway; AMP from ADP: step 1/1. Functionally, catalyzes the reversible transfer of the terminal phosphate group between ATP and AMP. Plays an important role in cellular energy homeostasis and in adenine nucleotide metabolism. The protein is Adenylate kinase of Neisseria gonorrhoeae (strain ATCC 700825 / FA 1090).